A 284-amino-acid polypeptide reads, in one-letter code: MLSKQIPLGIYEKALPAGECWLERLRLAKTLGFDFVEMSVDETDERLSRLDWSREQRLALVNAIVETGVRVPSMCLSAHRRFPLGSEDDAVRAQGLEIMRKAIQFAQDVGIRVIQLAGYDVYYQEANNETRRHFRDGLKESVEMASRAQVTLAMEIMDYPLMNSISKALGYAHYLNNPWFQLYPDIGNLSAWDNDVQMELQAGIGHIVAVHVKDTKPGVFKNVPFGEGVVDFERCFETLKQSGYCGPYLIEMWSETAEDPAAEVVKARDWVKARMAKAGMVEAA.

It belongs to the L-ribulose-5-phosphate 3-epimerase family.

The catalysed reaction is L-ribulose 5-phosphate = L-xylulose 5-phosphate. It participates in cofactor degradation; L-ascorbate degradation; D-xylulose 5-phosphate from L-ascorbate: step 3/4. Functionally, catalyzes the isomerization of L-xylulose-5-phosphate to L-ribulose-5-phosphate. Is involved in the anaerobic L-ascorbate utilization. The polypeptide is L-ribulose-5-phosphate 3-epimerase UlaE (Shigella boydii serotype 18 (strain CDC 3083-94 / BS512)).